Consider the following 242-residue polypeptide: TLC domain-containing protein 5 (242 aa).

6 consecutive transmembrane segments (helical) span residues L3 to C23, L37 to A57, I74 to F94, I109 to L129, L154 to V174, and L190 to I210. The TLC domain occupies G28–C219.

It belongs to the TLCD5 family.

Its subcellular location is the membrane. This is TLC domain-containing protein 5 (tlcd5) from Danio rerio (Zebrafish).